The primary structure comprises 86 residues: Electron transfer flavoprotein regulatory factor 1 (86 aa).

Belongs to the complex I LYR family.

It is found in the mitochondrion. In terms of biological role, acts as a regulator of the electron transfer flavoprotein by promoting the removal of flavin from the ETF holoenzyme (composed of ETFA and ETFB). This chain is Electron transfer flavoprotein regulatory factor 1, found in Taeniopygia guttata (Zebra finch).